Reading from the N-terminus, the 230-residue chain is MTGLFPDNPKSPIDLLALEGQALRRGFFRIAGIDEAGRGPLAGPVVAAAVILPPGLLLPGVNDSKQLTEEKREELFDVIHREALAVGVGIGDHALVDRINILQATLSAMRDAVRALSMTPGFLLIDGISNIPMNIPQRTVKKGDSLSLSIASASIIAKVTRDRMMVEYDAQYPGYGFASHKGYGAASHLAAIAELGPCPIHRKTFSGVKEHLPSQPDCDTAGPSTGLFSF.

The RNase H type-2 domain maps to 28–217 (FRIAGIDEAG…VKEHLPSQPD (190 aa)). 3 residues coordinate a divalent metal cation: D34, E35, and D126. The segment at 211-230 (HLPSQPDCDTAGPSTGLFSF) is disordered.

Belongs to the RNase HII family. The cofactor is Mn(2+). Mg(2+) is required as a cofactor.

The protein resides in the cytoplasm. The catalysed reaction is Endonucleolytic cleavage to 5'-phosphomonoester.. Functionally, endonuclease that specifically degrades the RNA of RNA-DNA hybrids. The polypeptide is Ribonuclease HII (Geobacter sp. (strain M21)).